The sequence spans 452 residues: Adenylosuccinate synthetase isozyme 1 (452 aa).

The disordered stretch occupies residues 1–22; that stretch reads MSGTRASNDRSSHPGGHKRPRY. Residues 37–43 and 65–67 each bind GTP; these read GDEGKGK and GHT. Aspartate 38 (proton acceptor) is an active-site residue. Mg(2+)-binding residues include aspartate 38 and glycine 65. Aspartate 38 provides a ligand contact to substrate. IMP contacts are provided by residues 38–41, 63–66, threonine 158, arginine 172, asparagine 251, threonine 266, and arginine 330; these read DEGK and NAGH. Histidine 66 acts as the Proton donor in catalysis. 326 to 332 is a binding site for substrate; sequence VTTGRKR. Residues arginine 332, 358-360, and 440-443 each bind GTP; these read KLD and GVGK.

Belongs to the adenylosuccinate synthetase family. As to quaternary structure, homodimer. Mg(2+) is required as a cofactor.

The protein localises to the cytoplasm. It catalyses the reaction IMP + L-aspartate + GTP = N(6)-(1,2-dicarboxyethyl)-AMP + GDP + phosphate + 2 H(+). It functions in the pathway purine metabolism; AMP biosynthesis via de novo pathway; AMP from IMP: step 1/2. Its function is as follows. Component of the purine nucleotide cycle (PNC), which interconverts IMP and AMP to regulate the nucleotide levels in various tissues, and which contributes to glycolysis and ammoniagenesis. Catalyzes the first committed step in the biosynthesis of AMP from IMP. The sequence is that of Adenylosuccinate synthetase isozyme 1 (adss1) from Xenopus tropicalis (Western clawed frog).